The chain runs to 78 residues: Translational regulator CsrA (78 aa).

This sequence belongs to the CsrA/RsmA family. Homodimer; the beta-strands of each monomer intercalate to form a hydrophobic core, while the alpha-helices form wings that extend away from the core.

It is found in the cytoplasm. In terms of biological role, a translational regulator that binds mRNA to regulate translation initiation and/or mRNA stability. Usually binds in the 5'-UTR at or near the Shine-Dalgarno sequence preventing ribosome-binding, thus repressing translation. Its main target seems to be the major flagellin gene, while its function is anatagonized by FliW. The sequence is that of Translational regulator CsrA from Borrelia recurrentis (strain A1).